The chain runs to 137 residues: Fluoride-specific ion channel FluC 1 (137 aa).

Helical transmembrane passes span 4 to 24 (LIYI…YYLG), 37 to 57 (LATL…TTYI), 67 to 87 (VITG…TFSV), and 100 to 120 (IAFL…GLGY). Na(+)-binding residues include Gly-77 and Thr-80.

The protein belongs to the fluoride channel Fluc/FEX (TC 1.A.43) family.

The protein localises to the cell membrane. The catalysed reaction is fluoride(in) = fluoride(out). Na(+) is not transported, but it plays an essential structural role and its presence is essential for fluoride channel function. Fluoride-specific ion channel. Important for reducing fluoride concentration in the cell, thus reducing its toxicity. The protein is Fluoride-specific ion channel FluC 1 of Bacillus thuringiensis subsp. konkukian (strain 97-27).